The primary structure comprises 309 residues: Elongation factor Ts (309 aa).

The involved in Mg(2+) ion dislocation from EF-Tu stretch occupies residues 82–85; sequence TDFV.

Belongs to the EF-Ts family.

The protein resides in the cytoplasm. Associates with the EF-Tu.GDP complex and induces the exchange of GDP to GTP. It remains bound to the aminoacyl-tRNA.EF-Tu.GTP complex up to the GTP hydrolysis stage on the ribosome. In Rickettsia felis (strain ATCC VR-1525 / URRWXCal2) (Rickettsia azadi), this protein is Elongation factor Ts.